A 65-amino-acid polypeptide reads, in one-letter code: Photosystem II reaction center protein Z (65 aa).

2 consecutive transmembrane segments (helical) span residues 8-28 and 41-61; these read AVFALVLLSFVLIVAVPVALA and YAGAALWTSLIIVIGVLDSVV.

It belongs to the PsbZ family. As to quaternary structure, PSII is composed of 1 copy each of membrane proteins PsbA, PsbB, PsbC, PsbD, PsbE, PsbF, PsbH, PsbI, PsbJ, PsbK, PsbL, PsbM, PsbT, PsbX, PsbY, PsbZ, Psb30/Ycf12, at least 3 peripheral proteins of the oxygen-evolving complex and a large number of cofactors. It forms dimeric complexes.

It is found in the plastid. The protein resides in the cyanelle thylakoid membrane. In terms of biological role, may control the interaction of photosystem II (PSII) cores with the light-harvesting antenna, regulates electron flow through the 2 photosystem reaction centers. PSII is a light-driven water plastoquinone oxidoreductase, using light energy to abstract electrons from H(2)O, generating a proton gradient subsequently used for ATP formation. The polypeptide is Photosystem II reaction center protein Z (Cyanophora paradoxa).